A 483-amino-acid polypeptide reads, in one-letter code: tRNA sulfurtransferase (483 aa).

Residues 62–166 (PQICDALTRV…QDKLTLIKAR (105 aa)) form the THUMP domain. Residues 184-185 (LI), Lys-266, Gly-288, and Gln-297 contribute to the ATP site. A disulfide bridge links Cys-345 with Cys-457. In terms of domain architecture, Rhodanese spans 405–483 (LADTDVLLDI…GYTNVKVYRP (79 aa)). Cys-457 (cysteine persulfide intermediate) is an active-site residue.

Belongs to the ThiI family.

Its subcellular location is the cytoplasm. The enzyme catalyses [ThiI sulfur-carrier protein]-S-sulfanyl-L-cysteine + a uridine in tRNA + 2 reduced [2Fe-2S]-[ferredoxin] + ATP + H(+) = [ThiI sulfur-carrier protein]-L-cysteine + a 4-thiouridine in tRNA + 2 oxidized [2Fe-2S]-[ferredoxin] + AMP + diphosphate. The catalysed reaction is [ThiS sulfur-carrier protein]-C-terminal Gly-Gly-AMP + S-sulfanyl-L-cysteinyl-[cysteine desulfurase] + AH2 = [ThiS sulfur-carrier protein]-C-terminal-Gly-aminoethanethioate + L-cysteinyl-[cysteine desulfurase] + A + AMP + 2 H(+). It participates in cofactor biosynthesis; thiamine diphosphate biosynthesis. Its function is as follows. Catalyzes the ATP-dependent transfer of a sulfur to tRNA to produce 4-thiouridine in position 8 of tRNAs, which functions as a near-UV photosensor. Also catalyzes the transfer of sulfur to the sulfur carrier protein ThiS, forming ThiS-thiocarboxylate. This is a step in the synthesis of thiazole, in the thiamine biosynthesis pathway. The sulfur is donated as persulfide by IscS. The chain is tRNA sulfurtransferase from Yersinia enterocolitica serotype O:8 / biotype 1B (strain NCTC 13174 / 8081).